The following is a 489-amino-acid chain: Toxin coregulated pilus biosynthesis outer membrane protein C (489 aa).

The signal sequence occupies residues Met-1–Gly-16. The N-palmitoyl cysteine moiety is linked to residue Cys-17. Cys-17 carries S-diacylglycerol cysteine lipidation. Helical transmembrane passes span Phe-174 to Leu-190, Ala-294 to Tyr-308, Gln-402 to Val-417, and Asn-442 to Thr-457.

Its subcellular location is the cell membrane. Its function is as follows. Involved in TCP pilus biogenesis. The protein is Toxin coregulated pilus biosynthesis outer membrane protein C (tcpC) of Vibrio cholerae serotype O1 (strain ATCC 39315 / El Tor Inaba N16961).